The following is a 152-amino-acid chain: UPF0225 protein YchJ (152 aa).

Belongs to the UPF0225 family.

This is UPF0225 protein YchJ from Shigella dysenteriae serotype 1 (strain Sd197).